Reading from the N-terminus, the 617-residue chain is UvrABC system protein C (617 aa).

The 80-residue stretch at 12-91 (EKPGVYLMKD…IKKYKPKYNV (80 aa)) folds into the GIY-YIG domain. Residues 203-238 (EWLVEKLKEEMQKAADELRFEEAARLRDQIFAIEKI) enclose the UVR domain.

It belongs to the UvrC family. In terms of assembly, interacts with UvrB in an incision complex.

It localises to the cytoplasm. Its function is as follows. The UvrABC repair system catalyzes the recognition and processing of DNA lesions. UvrC both incises the 5' and 3' sides of the lesion. The N-terminal half is responsible for the 3' incision and the C-terminal half is responsible for the 5' incision. In Caldanaerobacter subterraneus subsp. tengcongensis (strain DSM 15242 / JCM 11007 / NBRC 100824 / MB4) (Thermoanaerobacter tengcongensis), this protein is UvrABC system protein C.